The primary structure comprises 265 residues: Shikimate dehydrogenase (NADP(+)) (265 aa).

Shikimate contacts are provided by residues 15 to 17 and Thr62; that span reads SLS. Lys66 (proton acceptor) is an active-site residue. Shikimate is bound by residues Asn87 and Asp102. Residues 125–129, 149–154, and Leu209 contribute to the NADP(+) site; these read GAGGA and NRTLEK. Tyr211 contacts shikimate. Gly233 provides a ligand contact to NADP(+).

It belongs to the shikimate dehydrogenase family. As to quaternary structure, homodimer.

It catalyses the reaction shikimate + NADP(+) = 3-dehydroshikimate + NADPH + H(+). The protein operates within metabolic intermediate biosynthesis; chorismate biosynthesis; chorismate from D-erythrose 4-phosphate and phosphoenolpyruvate: step 4/7. Involved in the biosynthesis of the chorismate, which leads to the biosynthesis of aromatic amino acids. Catalyzes the reversible NADPH linked reduction of 3-dehydroshikimate (DHSA) to yield shikimate (SA). The sequence is that of Shikimate dehydrogenase (NADP(+)) from Legionella pneumophila (strain Corby).